The chain runs to 457 residues: Chromosomal replication initiator protein DnaA (457 aa).

Positions 1–71 (MSPSIWEKCL…LLKNFCNINT (71 aa)) are domain I, interacts with DnaA modulators. The segment at 71 to 119 (TTPTLMLKICKPKIIQKKFFNELTLKKNILNSKLTYNVNTKLSNIIYSS) is domain II. Residues 120–337 (EINTNYTFQN…GALNKILANS (218 aa)) are domain III, AAA+ region. Residues Gly-165, Gly-167, Lys-168, and Thr-169 each contribute to the ATP site. A domain IV, binds dsDNA region spans residues 338-457 (DSKKKIITIN…FLTLLKILSS (120 aa)).

The protein belongs to the DnaA family. In terms of assembly, oligomerizes as a right-handed, spiral filament on DNA at oriC.

It is found in the cytoplasm. Its function is as follows. Plays an essential role in the initiation and regulation of chromosomal replication. ATP-DnaA binds to the origin of replication (oriC) to initiate formation of the DNA replication initiation complex once per cell cycle. Binds the DnaA box (a 9 base pair repeat at the origin) and separates the double-stranded (ds)DNA. Forms a right-handed helical filament on oriC DNA; dsDNA binds to the exterior of the filament while single-stranded (ss)DNA is stabiized in the filament's interior. The ATP-DnaA-oriC complex binds and stabilizes one strand of the AT-rich DNA unwinding element (DUE), permitting loading of DNA polymerase. After initiation quickly degrades to an ADP-DnaA complex that is not apt for DNA replication. Binds acidic phospholipids. The protein is Chromosomal replication initiator protein DnaA of Buchnera aphidicola subsp. Baizongia pistaciae (strain Bp).